A 350-amino-acid chain; its full sequence is Protein RecA (350 aa).

ATP is bound at residue 67 to 74 (GPESSGKT).

The protein belongs to the RecA family.

It is found in the cytoplasm. Functionally, can catalyze the hydrolysis of ATP in the presence of single-stranded DNA, the ATP-dependent uptake of single-stranded DNA by duplex DNA, and the ATP-dependent hybridization of homologous single-stranded DNAs. It interacts with LexA causing its activation and leading to its autocatalytic cleavage. This Chlamydia caviae (strain ATCC VR-813 / DSM 19441 / 03DC25 / GPIC) (Chlamydophila caviae) protein is Protein RecA.